We begin with the raw amino-acid sequence, 414 residues long: Gamma-glutamyl phosphate reductase (414 aa).

This sequence belongs to the gamma-glutamyl phosphate reductase family.

It is found in the cytoplasm. It carries out the reaction L-glutamate 5-semialdehyde + phosphate + NADP(+) = L-glutamyl 5-phosphate + NADPH + H(+). It functions in the pathway amino-acid biosynthesis; L-proline biosynthesis; L-glutamate 5-semialdehyde from L-glutamate: step 2/2. Catalyzes the NADPH-dependent reduction of L-glutamate 5-phosphate into L-glutamate 5-semialdehyde and phosphate. The product spontaneously undergoes cyclization to form 1-pyrroline-5-carboxylate. The polypeptide is Gamma-glutamyl phosphate reductase (Xanthomonas oryzae pv. oryzae (strain MAFF 311018)).